Consider the following 612-residue polypeptide: 1,8-cineole synthase, chloroplastic (612 aa).

The transit peptide at 1 to 52 (MALVCGAPLASRSCLNKSLISSTHELKPLRRTILPTLRWKSATPSINMCLTT) directs the protein to the chloroplast. Positions 363, 367, and 515 each coordinate Mg(2+). Positions 363–367 (DDIYD) match the DDXXD motif motif.

It belongs to the terpene synthase family. Tpsd subfamily. Mg(2+) serves as cofactor. The cofactor is Mn(2+).

The protein resides in the plastid. The protein localises to the chloroplast. It carries out the reaction (2E)-geranyl diphosphate + H2O = 1,8-cineole + diphosphate. Its pathway is terpene metabolism; oleoresin biosynthesis. Terpene synthase (TPS) involved in the biosynthesis of monoterpene natural products included in conifer oleoresin secretions and volatile emissions; these compounds contribute to biotic and abiotic stress defense against herbivores and pathogens. Catalyzes the conversion of (2E)-geranyl diphosphate (GPP) to 1,8-cineole. In Picea glauca (White spruce), this protein is 1,8-cineole synthase, chloroplastic.